We begin with the raw amino-acid sequence, 136 residues long: Small ribosomal subunit protein uS8c (136 aa).

This sequence belongs to the universal ribosomal protein uS8 family. Part of the 30S ribosomal subunit.

It is found in the plastid. It localises to the chloroplast. In terms of biological role, one of the primary rRNA binding proteins, it binds directly to 16S rRNA central domain where it helps coordinate assembly of the platform of the 30S subunit. This is Small ribosomal subunit protein uS8c (rps8) from Oryza sativa subsp. indica (Rice).